Reading from the N-terminus, the 1704-residue chain is Nonribosomal peptide synthetase ivoA (1704 aa).

The tract at residues 234–620 (EEQAIARPDQ…HGRKDLEVKI (387 aa)) is adenylation. Residues 748 to 827 (NLISDPSDSM…EMATKTSAVE (80 aa)) form the Carrier domain. Ser-785 is modified (O-(pantetheine 4'-phosphoryl)serine). An epimerization (E) domain region spans residues 840–1266 (FPLSPVQQMY…QELLETAVER (427 aa)). Residues 1325–1477 (VQGDWTIEKT…AQSSTPSARK (153 aa)) are condensation.

Belongs to the NRP synthetase family.

It catalyses the reaction L-tryptophan + ATP + H2O = D-tryptophan + AMP + diphosphate + H(+). The protein operates within pigment biosynthesis. In terms of biological role, nonribosomal peptide synthetase; part of the pathway that mediates the biosynthesis of the gray-brown conidiophore pigment. The first step of the pathway is performed by the nonribosomal peptide synthetase ivoA that catalyzes ATP-dependent unidirectional stereoinversion of L-tryptophan to D-tryptophan with complete conversion. While the stereoinversion is catalyzed by the epimerization (E) domain of ivoA, the terminal condensation (C) domain stereoselectively hydrolyzes D-tryptophanyl-S-phosphopantetheine thioester and thus represents a non-canonical C domain function. D-tryptophan is acetylated, probably by an endogenous acetyltransferase. N-acetyltryptophan is further 6-hydroxylated into N-acetyl-6-hydroxytryptophan (AHT) by the cytochrome P450 monooxygenase ivoC. N-acetyl-6-hydroxytryptophan is substrate of the N-acetyl-6-hydroxytryptophan oxidase ivoB to produce the gray-brown conidiophore pigment. This Emericella nidulans (strain FGSC A4 / ATCC 38163 / CBS 112.46 / NRRL 194 / M139) (Aspergillus nidulans) protein is Nonribosomal peptide synthetase ivoA.